The primary structure comprises 315 residues: 31 kDa ribonucleoprotein, chloroplastic (315 aa).

Residues 1–71 constitute a chloroplast transit peptide; it reads MSCATKPIIK…LSPKKKTSVS (71 aa). Residues 114 to 133 form a disordered region; that stretch reads AGESDEVEADEEEEEFQEPP. The span at 115-133 shows a compositional bias: acidic residues; sequence GESDEVEADEEEEEFQEPP. 2 consecutive RRM domains span residues 136–214 and 230–308; these read AKLF…KAAR and YRIY…VAED.

It localises to the plastid. Its subcellular location is the chloroplast. In terms of biological role, could be involved in splicing and/or processing of chloroplast RNA's. This Nicotiana sylvestris (Wood tobacco) protein is 31 kDa ribonucleoprotein, chloroplastic.